The following is a 95-amino-acid chain: Small ribosomal subunit protein uS19 (95 aa).

This sequence belongs to the universal ribosomal protein uS19 family.

Functionally, protein S19 forms a complex with S13 that binds strongly to the 16S ribosomal RNA. The sequence is that of Small ribosomal subunit protein uS19 from Clostridium kluyveri (strain NBRC 12016).